The chain runs to 644 residues: 3D-(3,5/4)-trihydroxycyclohexane-1,2-dione hydrolase 1 (644 aa).

A thiamine diphosphate-binding site is contributed by glutamate 65. A thiamine pyrophosphate binding region spans residues 442 to 522 (SLPGDLQRMW…INVLLFDNSG (81 aa)). Mg(2+) is bound by residues aspartate 493 and asparagine 520.

The protein belongs to the TPP enzyme family. It depends on Mg(2+) as a cofactor. Thiamine diphosphate is required as a cofactor.

It catalyses the reaction 3D-3,5/4-trihydroxycyclohexane-1,2-dione + H2O = 5-deoxy-D-glucuronate + H(+). It participates in polyol metabolism; myo-inositol degradation into acetyl-CoA; acetyl-CoA from myo-inositol: step 3/7. In terms of biological role, involved in the cleavage of the C1-C2 bond of 3D-(3,5/4)-trihydroxycyclohexane-1,2-dione (THcHDO) to yield 5-deoxy-glucuronate (5DG). The polypeptide is 3D-(3,5/4)-trihydroxycyclohexane-1,2-dione hydrolase 1 (Bacillus cereus (strain ZK / E33L)).